A 163-amino-acid chain; its full sequence is Beta-lactoglobulin-2 (163 aa).

2 disulfide bridges follow: C66/C161 and C106/C120.

The protein belongs to the calycin superfamily. Lipocalin family. In terms of assembly, monomer.

Its subcellular location is the secreted. In terms of biological role, lactoglobulin is the primary component of whey, it binds retinol and is probably involved in the transport of that molecule. This chain is Beta-lactoglobulin-2 (LGB2), found in Felis catus (Cat).